The sequence spans 302 residues: Acetylglutamate kinase (302 aa).

Residues 67 to 68 (GG), Arg-89, and Asn-189 contribute to the substrate site.

The protein belongs to the acetylglutamate kinase family. ArgB subfamily.

The protein localises to the cytoplasm. It carries out the reaction N-acetyl-L-glutamate + ATP = N-acetyl-L-glutamyl 5-phosphate + ADP. The protein operates within amino-acid biosynthesis; L-arginine biosynthesis; N(2)-acetyl-L-ornithine from L-glutamate: step 2/4. In terms of biological role, catalyzes the ATP-dependent phosphorylation of N-acetyl-L-glutamate. The polypeptide is Acetylglutamate kinase (Streptomyces clavuligerus).